We begin with the raw amino-acid sequence, 237 residues long: Ribonuclease PH (237 aa).

Phosphate contacts are provided by residues Arg-86 and 124-126; that span reads GTR.

This sequence belongs to the RNase PH family. In terms of assembly, homohexameric ring arranged as a trimer of dimers.

The enzyme catalyses tRNA(n+1) + phosphate = tRNA(n) + a ribonucleoside 5'-diphosphate. In terms of biological role, phosphorolytic 3'-5' exoribonuclease that plays an important role in tRNA 3'-end maturation. Removes nucleotide residues following the 3'-CCA terminus of tRNAs; can also add nucleotides to the ends of RNA molecules by using nucleoside diphosphates as substrates, but this may not be physiologically important. Probably plays a role in initiation of 16S rRNA degradation (leading to ribosome degradation) during starvation. This is Ribonuclease PH from Methylorubrum extorquens (strain PA1) (Methylobacterium extorquens).